Here is a 548-residue protein sequence, read N- to C-terminus: SH2B adapter protein 3 (548 aa).

A compositionally biased stretch (polar residues) spans methionine 1–threonine 11. Disordered stretches follow at residues methionine 1 to serine 25, serine 78 to proline 108, and arginine 128 to tryptophan 160. Over residues serine 12 to proline 21 the composition is skewed to low complexity. Phosphoserine is present on residues serine 13, serine 102, and serine 129. Positions threonine 137–alanine 148 are enriched in polar residues. Residues glutamate 168–glycine 279 form the PH domain. Positions proline 290 to glycine 313 are disordered. Position 302 is a phosphoserine (serine 302). The SH2 domain occupies tryptophan 336–valine 434.

Belongs to the SH2B adapter family. Post-translationally, tyrosine phosphorylated.

Its function is as follows. Links T-cell receptor activation signal to phospholipase C-gamma-1, GRB2 and phosphatidylinositol 3-kinase. The polypeptide is SH2B adapter protein 3 (Sh2b3) (Mus musculus (Mouse)).